We begin with the raw amino-acid sequence, 494 residues long: Alpha-amylase-related protein (494 aa).

Residues 1-20 (MFKFASAVILCVVAASSTLA) form the signal peptide. Glutamine 21 is subject to Pyrrolidone carboxylic acid. A disulfide bridge links cysteine 48 with cysteine 104. Residues asparagine 118, glutamine 169, and aspartate 178 each coordinate Ca(2+). A disulfide bond links cysteine 157 and cysteine 171. Arginine 206 is a chloride binding site. Aspartate 208 serves as the catalytic Nucleophile. Histidine 212 serves as a coordination point for Ca(2+). Glutamate 245 (proton donor) is an active-site residue. Residues asparagine 308 and arginine 343 each contribute to the chloride site. Cystine bridges form between cysteine 376–cysteine 382, cysteine 418–cysteine 441, and cysteine 448–cysteine 460.

The protein belongs to the glycosyl hydrolase 13 family. Monomer. The cofactor is Ca(2+). Chloride is required as a cofactor.

It localises to the secreted. It carries out the reaction Endohydrolysis of (1-&gt;4)-alpha-D-glucosidic linkages in polysaccharides containing three or more (1-&gt;4)-alpha-linked D-glucose units.. The polypeptide is Alpha-amylase-related protein (Amyrel) (Drosophila varians (Fruit fly)).